We begin with the raw amino-acid sequence, 447 residues long: Argininosuccinate synthase (447 aa).

ATP-binding positions include 17 to 25 and Ala43; that span reads AFSGGLDTS. Tyr99 contacts L-citrulline. Positions 129 and 131 each coordinate ATP. Residues Thr131, Asn135, and Asp136 each contribute to the L-aspartate site. Asn135 lines the L-citrulline pocket. Asp136 lines the ATP pocket. Arg139 and Ser192 together coordinate L-citrulline. Residue Asp194 coordinates ATP. Positions 201, 203, and 280 each coordinate L-citrulline.

It belongs to the argininosuccinate synthase family. Type 2 subfamily. Homotetramer.

Its subcellular location is the cytoplasm. The catalysed reaction is L-citrulline + L-aspartate + ATP = 2-(N(omega)-L-arginino)succinate + AMP + diphosphate + H(+). It participates in amino-acid biosynthesis; L-arginine biosynthesis; L-arginine from L-ornithine and carbamoyl phosphate: step 2/3. This is Argininosuccinate synthase from Escherichia coli O127:H6 (strain E2348/69 / EPEC).